The primary structure comprises 535 residues: Sterol 26-hydroxylase, mitochondrial (535 aa).

The N-terminal 36 residues, methionine 1–threonine 36, are a transit peptide targeting the mitochondrion. Residue lysine 286 is modified to N6-acetyllysine. The interval proline 387 to proline 401 is sterol-binding. Cysteine 480 is a heme binding site. Lysine 524 carries the post-translational modification N6-acetyllysine.

The protein belongs to the cytochrome P450 family. Interacts with HSP70; this interaction is required for initial targeting to mitochondria. Heme serves as cofactor. Expressed in all tissues tested. Highest expression in liver and duodenum, followed by adrenal gland and lung. Low expression in kidney and spleen.

The protein resides in the mitochondrion inner membrane. It carries out the reaction 5beta-cholestane-3alpha,7alpha,12alpha-triol + 6 reduced [adrenodoxin] + 3 O2 + 5 H(+) = (25R)-3alpha,7alpha,12alpha-trihydroxy-5beta-cholestan-26-oate + 6 oxidized [adrenodoxin] + 4 H2O. It catalyses the reaction cholestanol + 2 reduced [adrenodoxin] + O2 + 2 H(+) = (25R)-26-hydroxycholestanol + 2 oxidized [adrenodoxin] + H2O. The enzyme catalyses (25R)-3beta-hydroxycholest-5-en-7-one-26-al + 2 reduced [adrenodoxin] + O2 + H(+) = (25R)-3beta-hydroxycholest-5-en-7-one-26-oate + 2 oxidized [adrenodoxin] + H2O. The catalysed reaction is (25R)-3beta,26-dihydroxycholest-5-en-7-one + 2 reduced [adrenodoxin] + O2 + 2 H(+) = (25R)-3beta-hydroxycholest-5-en-7-one-26-al + 2 oxidized [adrenodoxin] + 2 H2O. It carries out the reaction 7-oxocholesterol + 2 reduced [adrenodoxin] + O2 + 2 H(+) = (25R)-3beta,26-dihydroxycholest-5-en-7-one + 2 oxidized [adrenodoxin] + H2O. It catalyses the reaction calciol + 2 reduced [adrenodoxin] + O2 + 2 H(+) = calcidiol + 2 oxidized [adrenodoxin] + H2O. The enzyme catalyses (25R)-5beta-cholestane-3alpha,7alpha,12alpha,26-tetrol + 2 reduced [adrenodoxin] + O2 + 2 H(+) = (25R)-3alpha,7alpha,12alpha-trihydroxy-5beta-cholestan-26-al + 2 oxidized [adrenodoxin] + 2 H2O. The catalysed reaction is 2 reduced [adrenodoxin] + cholesterol + O2 + 2 H(+) = (25R)-cholest-5-ene-3beta,26-diol + 2 oxidized [adrenodoxin] + H2O. It carries out the reaction (25R)-3beta,4beta-dihydroxycholest-5-en-26-al + 2 reduced [adrenodoxin] + O2 + H(+) = (25R)-3beta,4beta-dihydroxycholest-5-en-26-oate + 2 oxidized [adrenodoxin] + H2O. It catalyses the reaction (25R)-4beta,26-dihydroxycholesterol + 2 reduced [adrenodoxin] + O2 + 2 H(+) = (25R)-3beta,4beta-dihydroxycholest-5-en-26-al + 2 oxidized [adrenodoxin] + 2 H2O. The enzyme catalyses 4beta-hydroxycholesterol + 2 reduced [adrenodoxin] + O2 + 2 H(+) = (25R)-4beta,26-dihydroxycholesterol + 2 oxidized [adrenodoxin] + H2O. The catalysed reaction is (25R)-3beta-hydroxy-5-cholesten-26-al + 2 reduced [adrenodoxin] + O2 + H(+) = (25R)-3beta-hydroxy-5-cholestenoate + 2 oxidized [adrenodoxin] + H2O. It carries out the reaction (25R)-cholest-5-ene-3beta,26-diol + 2 reduced [adrenodoxin] + O2 + 2 H(+) = (25R)-3beta-hydroxy-5-cholesten-26-al + 2 oxidized [adrenodoxin] + 2 H2O. It catalyses the reaction (25R)-3alpha,7alpha,12alpha-trihydroxy-5beta-cholestan-26-al + 2 reduced [adrenodoxin] + O2 + H(+) = (25R)-3alpha,7alpha,12alpha-trihydroxy-5beta-cholestan-26-oate + 2 oxidized [adrenodoxin] + H2O. The enzyme catalyses 5beta-cholestane-3alpha,7alpha,12alpha-triol + 2 reduced [adrenodoxin] + O2 + 2 H(+) = (25R)-5beta-cholestane-3alpha,7alpha,12alpha,26-tetrol + 2 oxidized [adrenodoxin] + H2O. The protein operates within hormone biosynthesis; cholecalciferol biosynthesis. It participates in steroid metabolism; cholesterol degradation. Its pathway is lipid metabolism; bile acid biosynthesis. Functionally, cytochrome P450 monooxygenase that catalyzes regio- and stereospecific hydroxylation of cholesterol and its derivatives. Hydroxylates (with R stereochemistry) the terminal methyl group of cholesterol side-chain in a three step reaction to yield at first a C26 alcohol, then a C26 aldehyde and finally a C26 acid. Regulates cholesterol homeostasis by catalyzing the conversion of excess cholesterol to bile acids via both the 'neutral' (classic) and the 'acid' (alternative) pathways. May also regulate cholesterol homeostasis via generation of active oxysterols, which act as ligands for NR1H2 and NR1H3 nuclear receptors, modulating the transcription of genes involved in lipid metabolism. Plays a role in cholestanol metabolism in the cerebellum. Similarly to cholesterol, hydroxylates cholestanol and may facilitate sterol diffusion through the blood-brain barrier to the systemic circulation for further degradation. Also hydroxylates retinal 7-ketocholesterol, a noxious oxysterol with pro-inflammatory and pro-apoptotic effects, and may play a role in its elimination from the retinal pigment epithelium. May play a redundant role in vitamin D biosynthesis. Catalyzes 25-hydroxylation of vitamin D3 that is required for its conversion to a functionally active form. The polypeptide is Sterol 26-hydroxylase, mitochondrial (CYP27A1) (Oryctolagus cuniculus (Rabbit)).